A 270-amino-acid chain; its full sequence is Bacterial microcompartment shell protein PduB (270 aa).

The interval 6–18 (LVEQIMAQVIARV) is probable helix that binds cargo to the BMC shell. BMC circularly permuted domains follow at residues 47 to 152 (EFVG…DRTF) and 154 to 258 (DVYG…LATL).

The protein belongs to the EutL/PduB family. In terms of assembly, homotrimerizes to form a pseudohexamer with a central pore. The trimers pack into an array. In purified BMCs seen as a 28.0 kDa and 25.0 kDa form, both of which have been N-terminally sequenced and whose N-fMet is removed; the smaller form is called PduB'.

Its subcellular location is the bacterial microcompartment. The protein operates within polyol metabolism; 1,2-propanediol degradation. Functionally, the two proteins produced are among the major shell proteins of the bacterial microcompartment (BMC) dedicated to 1,2-propanediol (1,2-PD) degradation. Required for structural integrity of BMCs and to mitigate propionaldehyde toxicity. The N-terminal 13 residues are important for correct assembly of the BMC shell. The isolated BMC shell component protein ratio for J:A:B':B:K:T:U is approximately 15:10:7:6:1:1:2. The N-terminus of the long form (PduB) is required for correct formation of BMCs, deletions in the first 37 residues have substantially reduced levels of the major lumen enzymes. May play a major role in binding the enzyme contents to the shell. Its function is as follows. The 1,2-PD-specific bacterial microcompartment (BMC) concentrates low levels of 1,2-PD catabolic enzymes, concentrates volatile reaction intermediates thus enhancing pathway flux and keeps the level of toxic, mutagenic propionaldehyde low. This Salmonella typhimurium (strain LT2 / SGSC1412 / ATCC 700720) protein is Bacterial microcompartment shell protein PduB.